A 67-amino-acid polypeptide reads, in one-letter code: MSLFPVIVVFGLSFPPIFFELLLSLAIFWLVRRMLVPTGIYDFVWHPALFNTALYCCLFYLISRLFV.

Helical transmembrane passes span 3 to 23 (LFPV…ELLL) and 43 to 63 (FVWH…YLIS).

It belongs to the AaeX family.

The protein localises to the cell membrane. This Salmonella agona (strain SL483) protein is Protein AaeX.